The sequence spans 3392 residues: Genome polyprotein (3392 aa).

Residues 1-101 (MNNQRKKTGR…LNIMNRRKRS (101 aa)) lie on the Cytoplasmic side of the membrane. The interval 33–74 (FSKGLLSGQGPMKLVMAFIAFLRFLAIPPTAGILARWSSFKK) is hydrophobic; homodimerization of capsid protein C. Positions 101 to 114 (SVTMLLMLLPTALA) are cleaved as a propeptide — ER anchor for the protein C, removed in mature form by serine protease NS3. Residues 102-119 (VTMLLMLLPTALAFHLTT) form a helical membrane-spanning segment. The Extracellular segment spans residues 120–242 (RGGEPHMIVS…QIQKVETWAL (123 aa)). Asparagine 183 carries an N-linked (GlcNAc...) asparagine; by host glycan. Residues 243–260 (RHPGFTVIALFLAHAIGT) form a helical membrane-spanning segment. Serine 261 is a topological domain (cytoplasmic). Residues 262 to 280 (ITQKGIIFILLMLVTPSMA) traverse the membrane as a helical segment. Over 281-725 (MRCVGIGNRD…VHQVFGTAYG (445 aa)) the chain is Extracellular. 4 disulfide bridges follow: cysteine 283/cysteine 310, cysteine 340/cysteine 401, cysteine 354/cysteine 385, and cysteine 372/cysteine 396. A glycan (N-linked (GlcNAc...) asparagine; by host) is linked at asparagine 347. A glycan (N-linked (GlcNAc...) asparagine; by host) is linked at asparagine 433. Disulfide bonds link cysteine 465–cysteine 565 and cysteine 582–cysteine 613. Positions 726-746 (VLFSGVSWTMKIGIGILLTWL) form an intramembrane region, helical. The Extracellular segment spans residues 747-752 (GLNSRS). Positions 753–775 (TSLSMTCIAVGMVTLYLGVMVQA) form an intramembrane region, helical. The Extracellular portion of the chain corresponds to 776–1125 (DSGCVINWKG…KEENLVRSMV (350 aa)). Intrachain disulfides connect cysteine 779/cysteine 790, cysteine 830/cysteine 918, cysteine 954/cysteine 998, cysteine 1055/cysteine 1104, cysteine 1066/cysteine 1088, and cysteine 1087/cysteine 1091. Asparagine 905 and asparagine 982 each carry an N-linked (GlcNAc...) asparagine; by host glycan. Residues 1126-1146 (SAGSGEVDSFSLGILCVSIMI) form a helical membrane-spanning segment. The Cytoplasmic portion of the chain corresponds to 1147 to 1157 (EEVMRSRWSRK). Residues 1158 to 1178 (MLMTGTLAVFLLLIMGQLTWN) form a helical membrane-spanning segment. The Lumenal segment spans residues 1179–1199 (DLIRLCIMVGANASDKMGMGT). N-linked (GlcNAc...) asparagine; by host glycosylation occurs at asparagine 1190. The chain crosses the membrane as a helical span at residues 1200-1220 (TYLALMATFKMRPMFAVGLLF). The Cytoplasmic segment spans residues 1221 to 1289 (RRLTSREVLL…TFIKTTLSLD (69 aa)). Residues 1290–1310 (YAWKTTAMVLSIVSLFPLCLS) traverse the membrane as a helical segment. Residues 1311 to 1315 (TTSQK) are Lumenal-facing. A helical membrane pass occupies residues 1316–1336 (TTWLPVLLGSFGCKPLTMFLI). At 1337-1346 (TENEIWGRKS) the chain is on the cytoplasmic side. The chain crosses the membrane as a helical span at residues 1347–1367 (WPLNEGIMAIGIVSILLSSLL). Over 1368–1370 (KND) the chain is Lumenal. Residues 1371–1391 (VPLAGPLIAGGMLIACYVISG) form a helical membrane-spanning segment. Over 1392 to 1447 (SSADLSLEKAAEVSWEEEAEHSGTSHNILVEVQDDGTMKIKDEERDDTLTILLKAT) the chain is Cytoplasmic. Residues 1398-1437 (LEKAAEVSWEEEAEHSGTSHNILVEVQDDGTMKIKDEERD) are interacts with and activates NS3 protease. Positions 1448 to 1468 (LLAVSGVYPMSIPATLFVWYF) form an intramembrane region, helical. The Cytoplasmic portion of the chain corresponds to 1469-2148 (WQKKKQRSGV…MEELPDTIET (680 aa)). One can recognise a Peptidase S7 domain in the interval 1476 to 1653 (SGVLWDTPSP…KASQEGPLPE (178 aa)). Catalysis depends on charge relay system; for serine protease NS3 activity residues histidine 1526, aspartate 1550, and serine 1610. Residues 1656 to 1812 (DEVFKKRNLT…QSNAVIQDEE (157 aa)) enclose the Helicase ATP-binding domain. 1669–1676 (LHPGSGKT) contacts ATP. A DEAH box motif is present at residues 1760-1763 (DEAH). The Helicase C-terminal domain maps to 1822–1989 (SGYDWITDFP…IIPALFEPER (168 aa)). N6-acetyllysine; by host is present on lysine 1864. A helical membrane pass occupies residues 2149–2169 (LMLLALIAVLTGGVTLFFLSG). Topologically, residues 2170-2171 (KG) are lumenal. The helical intramembrane region spans 2172–2192 (LGKTSIGLLCVTASSALLWMA). Serine 2193 is a topological domain (lumenal). A helical transmembrane segment spans residues 2194-2214 (VEPHWIAASIILEFFLMVLLI). The Cytoplasmic segment spans residues 2215–2229 (PEPDRQRTPQDNQLA). The chain crosses the membrane as a helical span at residues 2230–2250 (YVVIGLLFMILTVAANEMGLL). Residues 2251-2276 (ETTKKDLGIGHVAAENHQHATILDVD) are Lumenal-facing. The helical intramembrane region spans 2277–2297 (LHPASAWTLYAVATTVITPMM). Over 2298–2349 (RHTIENTTANISLTAIANQAAILMGLDKGWPISKMDLGVPLLALGCYSQVNP) the chain is Lumenal. N-linked (GlcNAc...) asparagine; by host glycosylation is found at asparagine 2303 and asparagine 2307. Residues 2350-2370 (LTLTAAVLMLVAHYAIIGPGL) traverse the membrane as a helical segment. The Cytoplasmic segment spans residues 2371–2415 (QAKATREAQKRTAAGIMKNPTVDGIVAIDLDPVVYDAKFEKQLGQ). Residues 2416-2436 (IMLLILCTSQILLMRTTWALC) traverse the membrane as a helical segment. The Lumenal portion of the chain corresponds to 2437–2461 (ESITLATGPLTTLWEGSPGKFWNTT). Asparagine 2459 carries N-linked (GlcNAc...) asparagine; by host glycosylation. A helical transmembrane segment spans residues 2462–2482 (IAVSMANIFRGSYLAGAGLAF). At 2483-3392 (SLMKSLGGGR…NESDPEGALW (910 aa)) the chain is on the cytoplasmic side. The mRNA cap 0-1 NS5-type MT domain occupies 2495–2756 (TGAQGETLGE…DVDLGAGTRH (262 aa)). S-adenosyl-L-methionine contacts are provided by serine 2549, glycine 2579, tryptophan 2580, threonine 2597, lysine 2598, aspartate 2624, valine 2625, isoleucine 2640, and tyrosine 2711. Residues 3021–3170 (NMYADDTAGW…PIDDRFATAL (150 aa)) form the RdRp catalytic domain.

In the N-terminal section; belongs to the class I-like SAM-binding methyltransferase superfamily. mRNA cap 0-1 NS5-type methyltransferase family. Capsid protein C: Homodimer. Interacts (via N-terminus) with host EXOC1 (via C-terminus); this interaction results in EXOC1 degradation through the proteasome degradation pathway. In terms of assembly, forms heterodimers with envelope protein E in the endoplasmic reticulum and Golgi. As to quaternary structure, homodimer; in the endoplasmic reticulum and Golgi. Interacts with protein prM. Interacts with non-structural protein 1. Homodimer; Homohexamer when secreted. Interacts with envelope protein E. In terms of assembly, interacts (via N-terminus) with serine protease NS3. As to quaternary structure, forms a heterodimer with serine protease NS3. May form homooligomers. Forms a heterodimer with NS2B. Interacts with NS4B. Interacts with unphosphorylated RNA-directed RNA polymerase NS5; this interaction stimulates RNA-directed RNA polymerase NS5 guanylyltransferase activity. Interacts with host SHFL. In terms of assembly, interacts with host MAVS; this interaction inhibits the synthesis of IFN-beta. Interacts with host SHFL. Interacts with host AUP1; the interaction occurs in the presence of Dengue virus NS4B and induces lipophagy which facilitates production of virus progeny particles. As to quaternary structure, interacts with serine protease NS3. Homodimer. Interacts with host STAT2; this interaction inhibits the phosphorylation of the latter, and, when all viral proteins are present (polyprotein), targets STAT2 for degradation. Interacts with serine protease NS3. Specific enzymatic cleavages in vivo yield mature proteins. Cleavages in the lumen of endoplasmic reticulum are performed by host signal peptidase, wereas cleavages in the cytoplasmic side are performed by the Serine protease NS3. Signal cleavage at the 2K-4B site requires a prior NS3 protease-mediated cleavage at the 4A-2K site. Post-translationally, a C-terminally truncated form of non-structural protein 2A, results from partial cleavage by NS3. In terms of processing, cleaved in post-Golgi vesicles by a host furin, releasing the mature small envelope protein M, and peptide pr. This cleavage is incomplete as up to 30% of viral particles still carry uncleaved prM. The excreted form is glycosylated and this is required for efficient secretion of the protein from infected cells. Post-translationally, phosphorylated on serines residues. This phosphorylation may trigger NS5 nuclear localization. In terms of processing, N-glycosylated. Acetylated by host KAT5. Acetylation modulates NS3 RNA-binding and unwinding activities and plays an important positive role for viral replication.

The protein localises to the virion. Its subcellular location is the host nucleus. It localises to the secreted. The protein resides in the virion membrane. It is found in the host endoplasmic reticulum membrane. The protein localises to the host mitochondrion. It carries out the reaction Selective hydrolysis of -Xaa-Xaa-|-Yaa- bonds in which each of the Xaa can be either Arg or Lys and Yaa can be either Ser or Ala.. The catalysed reaction is RNA(n) + a ribonucleoside 5'-triphosphate = RNA(n+1) + diphosphate. The enzyme catalyses a ribonucleoside 5'-triphosphate + H2O = a ribonucleoside 5'-diphosphate + phosphate + H(+). It catalyses the reaction ATP + H2O = ADP + phosphate + H(+). It carries out the reaction a 5'-end (5'-triphosphoguanosine)-ribonucleoside in mRNA + S-adenosyl-L-methionine = a 5'-end (N(7)-methyl 5'-triphosphoguanosine)-ribonucleoside in mRNA + S-adenosyl-L-homocysteine. The catalysed reaction is a 5'-end (N(7)-methyl 5'-triphosphoguanosine)-ribonucleoside in mRNA + S-adenosyl-L-methionine = a 5'-end (N(7)-methyl 5'-triphosphoguanosine)-(2'-O-methyl-ribonucleoside) in mRNA + S-adenosyl-L-homocysteine + H(+). In terms of biological role, plays a role in virus budding by binding to membrane and gathering the viral RNA into a nucleocapsid that forms the core of a mature virus particle. During virus entry, may induce genome penetration in host cytoplasm after hemifusion induced by surface proteins. Can migrate tot cell nucleus where it modulates host functions. Its function is as follows. Prevents premature fusion activity of envelope proteins in trans Golgi by binding to envelope protein E at pH6.0. After virion release in extracellular space gets dissociated from E dimers. Acts as a chaperone for envelope protein E during intracellular virion assembly by masking and inactivating envelope protein E fusion peptide. prM is the only viral peptide matured by host furin in the trans-Golgi network. Presumably to avoid catastrophic activation of the viral fusion activity in acidic GolGi compartment prior to virion release. prM-E cleavage is ineficient, and many virions are only partially matured. These uncleaved prM would play a role in immune evasion. Functionally, may play a role in virus budding. Exerts cytotoxic effects by activating a mitochondrial apoptotic pathway through M extodomain. May display a viroporin activity. In terms of biological role, binds to host cell surface receptor and mediates fusion between viral and cellular membranes. Envelope protein is synthesized in the endoplasmic reticulum in the form of heterodimer with protein prM. They play a role in virion budding in the ER, and the newly formed immature particle is covered with 60 spikes composed of heterodimer between precursor prM and envelope protein E. The virion is transported to the Golgi apparatus where the low pH causes dissociation of PrM-E heterodimers and formation of E homodimers. prM-E cleavage is ineficient, and many virions are only partially matured. These uncleaved prM would play a role in immune evasion. Its function is as follows. Involved in immune evasion, pathogenesis and viral replication. Once cleaved off the polyprotein, is targeted to three destinations: the viral replication cycle, the plasma membrane and the extracellular compartment. May play a role in viral genome replication. Assist membrane bending and envelopment of genomic RNA at the endoplasmic reticulum. Excreted as a hexameric lipoparticle that plays a role against host immune response. Component of the viral RNA replication complex that functions in virion assembly and antagonizes the host immune response. Functionally, required cofactor for the serine protease function of NS3. May have membrane-destabilizing activity and form viroporins. In terms of biological role, displays three enzymatic activities: serine protease, NTPase and RNA helicase. NS3 serine protease, in association with NS2B, performs its autocleavage and cleaves the polyprotein at dibasic sites in the cytoplasm: C-prM, NS2A-NS2B, NS2B-NS3, NS3-NS4A, NS4A-2K and NS4B-NS5. NS3 RNA helicase binds RNA and unwinds dsRNA in the 3' to 5' direction. Its function is as follows. Regulates the ATPase activity of the NS3 helicase activity. NS4A allows NS3 helicase to conserve energy during unwinding. Plays a role in the inhibition of the host innate immune response. Interacts with host MAVS and thereby prevents the interaction between RIGI and MAVS. In turn, IFN-beta production is impaired. Interacts with host AUP1 which mediates induction of lipophagy in host cells and facilitates production of virus progeny particles. Functions as a signal peptide for NS4B and is required for the interferon antagonism activity of the latter. Functionally, inhibits interferon (IFN)-induced host STAT1 phosphorylation and nuclear translocation, thereby preventing the establishment of cellular antiviral state by blocking the IFN-alpha/beta pathway. In terms of biological role, replicates the viral (+) and (-) genome, and performs the capping of genomes in the cytoplasm. NS5 methylates viral RNA cap at guanine N-7 and ribose 2'-O positions. Besides its role in RNA genome replication, also prevents the establishment of cellular antiviral state by blocking the interferon-alpha/beta (IFN-alpha/beta) signaling pathway. Inhibits host TYK2 and STAT2 phosphorylation, thereby preventing activation of JAK-STAT signaling pathway. This is Genome polyprotein from Dengue virus type 1 (strain Brazil/97-11/1997) (DENV-1).